A 243-amino-acid chain; its full sequence is Small ribosomal subunit protein uS3 (243 aa).

The KH type-2 domain maps to 39-110 (IRVFIQKKYG…QVRINVVEIE (72 aa)). Residues 216–243 (QPLPVGASPRRKGNRRPQQFEDRSNDGK) are disordered. The segment covering 233–243 (QQFEDRSNDGK) has biased composition (basic and acidic residues).

Belongs to the universal ribosomal protein uS3 family. In terms of assembly, part of the 30S ribosomal subunit. Forms a tight complex with proteins S10 and S14.

Its function is as follows. Binds the lower part of the 30S subunit head. Binds mRNA in the 70S ribosome, positioning it for translation. The chain is Small ribosomal subunit protein uS3 from Prochlorococcus marinus (strain SARG / CCMP1375 / SS120).